A 403-amino-acid chain; its full sequence is Na(+)-translocating NADH-quinone reductase subunit B (403 aa).

9 helical membrane passes run methionine 56 to glycine 76, alanine 121 to phenylalanine 141, isoleucine 163 to isoleucine 183, tryptophan 220 to isoleucine 240, threonine 265 to tryptophan 285, isoleucine 287 to serine 307, methionine 312 to phenylalanine 332, tryptophan 348 to phenylalanine 368, and glycine 371 to valine 391. Threonine 230 is subject to FMN phosphoryl threonine.

It belongs to the NqrB/RnfD family. Composed of six subunits; NqrA, NqrB, NqrC, NqrD, NqrE and NqrF. It depends on FMN as a cofactor.

The protein localises to the cell inner membrane. The catalysed reaction is a ubiquinone + n Na(+)(in) + NADH + H(+) = a ubiquinol + n Na(+)(out) + NAD(+). In terms of biological role, NQR complex catalyzes the reduction of ubiquinone-1 to ubiquinol by two successive reactions, coupled with the transport of Na(+) ions from the cytoplasm to the periplasm. NqrA to NqrE are probably involved in the second step, the conversion of ubisemiquinone to ubiquinol. This Ectopseudomonas mendocina (strain ymp) (Pseudomonas mendocina) protein is Na(+)-translocating NADH-quinone reductase subunit B.